We begin with the raw amino-acid sequence, 295 residues long: Indole-3-glycerol phosphate synthase (295 aa).

The protein belongs to the TrpC family.

The enzyme catalyses 1-(2-carboxyphenylamino)-1-deoxy-D-ribulose 5-phosphate + H(+) = (1S,2R)-1-C-(indol-3-yl)glycerol 3-phosphate + CO2 + H2O. The protein operates within amino-acid biosynthesis; L-tryptophan biosynthesis; L-tryptophan from chorismate: step 4/5. The chain is Indole-3-glycerol phosphate synthase from Synechococcus sp. (strain CC9605).